The following is an 87-amino-acid chain: Small ribosomal subunit protein uS17 (87 aa).

Belongs to the universal ribosomal protein uS17 family. As to quaternary structure, part of the 30S ribosomal subunit.

In terms of biological role, one of the primary rRNA binding proteins, it binds specifically to the 5'-end of 16S ribosomal RNA. This chain is Small ribosomal subunit protein uS17, found in Thioalkalivibrio sulfidiphilus (strain HL-EbGR7).